A 343-amino-acid polypeptide reads, in one-letter code: L-threonine 3-dehydrogenase (343 aa).

C40 is a Zn(2+) binding site. Residues T42 and H45 each act as charge relay system in the active site. Zn(2+)-binding residues include H65, E66, C95, C98, C101, and C109. Residues I177, D197, R202, 264–266 (LGI), and 288–289 (IY) each bind NAD(+).

The protein belongs to the zinc-containing alcohol dehydrogenase family. As to quaternary structure, homotetramer. The cofactor is Zn(2+).

It is found in the cytoplasm. The catalysed reaction is L-threonine + NAD(+) = (2S)-2-amino-3-oxobutanoate + NADH + H(+). The protein operates within amino-acid degradation; L-threonine degradation via oxydo-reductase pathway; glycine from L-threonine: step 1/2. Catalyzes the NAD(+)-dependent oxidation of L-threonine to 2-amino-3-ketobutyrate. The sequence is that of L-threonine 3-dehydrogenase from Photobacterium profundum (strain SS9).